Here is an 86-residue protein sequence, read N- to C-terminus: U18-theraphotoxin-Cg1a (86 aa).

The N-terminal stretch at Lys1–Ala20 is a signal peptide. Residues Ala21–Arg49 constitute a propeptide that is removed on maturation. Intrachain disulfides connect Cys51–Cys65, Cys58–Cys70, and Cys64–Cys78. At Phe84 the chain carries Phenylalanine amide.

This sequence belongs to the neurotoxin 10 (Hwtx-1) family. 47 subfamily. Expressed by the venom gland.

The protein resides in the secreted. Inhibits TTX-sensitive and TTX-insensitive sodium currents (IC(50) is 0.6 uM and 0.95 uM respectively) on rat dorsal root ganglion (DRG) neurons. Inhibits muscular subtypes sodium channels Nav1.4/SCN4A and Nav1.5/SCN5A transiently transfected in to HEK293 cells (IC(50) is 5.42 uM and 0.45 uM respectively). Also blocks Kv2.1/KCNB1 potassium channels expressed in X.laevis oocytes with an IC(50) of 604 nM. Injection of the toxin in mice was immediately followed by general ataxia, lack of response to stimuli and semiparalysis. This is U18-theraphotoxin-Cg1a from Chilobrachys guangxiensis (Chinese earth tiger tarantula).